Here is a 224-residue protein sequence, read N- to C-terminus: Ribonuclease HII (224 aa).

The RNase H type-2 domain occupies 7–217; that stretch reads STIMGIDEAG…SNAVIADCLQ (211 aa). 3 residues coordinate a divalent metal cation: D13, E14, and D111.

It belongs to the RNase HII family. The cofactor is Mn(2+). Mg(2+) serves as cofactor.

It localises to the cytoplasm. It catalyses the reaction Endonucleolytic cleavage to 5'-phosphomonoester.. Endonuclease that specifically degrades the RNA of RNA-DNA hybrids. In Methanocella arvoryzae (strain DSM 22066 / NBRC 105507 / MRE50), this protein is Ribonuclease HII.